We begin with the raw amino-acid sequence, 592 residues long: Aspartate--tRNA ligase (592 aa).

E173 lines the L-aspartate pocket. Residues 197-200 form an aspartate region; the sequence is QLFK. R219 serves as a coordination point for L-aspartate. ATP is bound by residues 219–221 and Q228; that span reads RDE. An L-aspartate-binding site is contributed by H449. An ATP-binding site is contributed by E483. R490 contacts L-aspartate. 535–538 is an ATP binding site; the sequence is GLDR.

Belongs to the class-II aminoacyl-tRNA synthetase family. Type 1 subfamily. In terms of assembly, homodimer.

Its subcellular location is the cytoplasm. It catalyses the reaction tRNA(Asp) + L-aspartate + ATP = L-aspartyl-tRNA(Asp) + AMP + diphosphate. Functionally, catalyzes the attachment of L-aspartate to tRNA(Asp) in a two-step reaction: L-aspartate is first activated by ATP to form Asp-AMP and then transferred to the acceptor end of tRNA(Asp). This Shewanella loihica (strain ATCC BAA-1088 / PV-4) protein is Aspartate--tRNA ligase.